The sequence spans 162 residues: Cyclic pyranopterin monophosphate synthase (162 aa).

Substrate contacts are provided by residues 75–77 and 113–114; these read LCH and ME. Asp128 is a catalytic residue.

It belongs to the MoaC family. In terms of assembly, homohexamer; trimer of dimers.

The catalysed reaction is (8S)-3',8-cyclo-7,8-dihydroguanosine 5'-triphosphate = cyclic pyranopterin phosphate + diphosphate. The protein operates within cofactor biosynthesis; molybdopterin biosynthesis. Catalyzes the conversion of (8S)-3',8-cyclo-7,8-dihydroguanosine 5'-triphosphate to cyclic pyranopterin monophosphate (cPMP). The protein is Cyclic pyranopterin monophosphate synthase of Klebsiella pneumoniae subsp. pneumoniae (strain ATCC 700721 / MGH 78578).